The sequence spans 358 residues: Phosphoserine aminotransferase (358 aa).

Residue R41 coordinates L-glutamate. Residues 75 to 76 (AS), W100, T148, D167, and Q190 each bind pyridoxal 5'-phosphate. N6-(pyridoxal phosphate)lysine is present on K191. 233–234 (NT) contributes to the pyridoxal 5'-phosphate binding site.

The protein belongs to the class-V pyridoxal-phosphate-dependent aminotransferase family. SerC subfamily. As to quaternary structure, homodimer. The cofactor is pyridoxal 5'-phosphate.

It localises to the cytoplasm. It carries out the reaction O-phospho-L-serine + 2-oxoglutarate = 3-phosphooxypyruvate + L-glutamate. The enzyme catalyses 4-(phosphooxy)-L-threonine + 2-oxoglutarate = (R)-3-hydroxy-2-oxo-4-phosphooxybutanoate + L-glutamate. It participates in amino-acid biosynthesis; L-serine biosynthesis; L-serine from 3-phospho-D-glycerate: step 2/3. Its pathway is cofactor biosynthesis; pyridoxine 5'-phosphate biosynthesis; pyridoxine 5'-phosphate from D-erythrose 4-phosphate: step 3/5. Catalyzes the reversible conversion of 3-phosphohydroxypyruvate to phosphoserine and of 3-hydroxy-2-oxo-4-phosphonooxybutanoate to phosphohydroxythreonine. This is Phosphoserine aminotransferase from Campylobacter lari (strain RM2100 / D67 / ATCC BAA-1060).